The following is a 341-amino-acid chain: GTPase Obg (341 aa).

One can recognise an Obg domain in the interval 1-159 (MKFLDQAKVY…RTLWLRLKLI (159 aa)). In terms of domain architecture, OBG-type G spans 160–327 (ADAGLIGLPN…MLRAGAHMIE (168 aa)). GTP-binding positions include 166–173 (GLPNAGKS), 191–195 (FTTLY), 212–215 (DIPG), 279–282 (SQID), and 308–310 (SAV). Mg(2+) contacts are provided by S173 and T193.

The protein belongs to the TRAFAC class OBG-HflX-like GTPase superfamily. OBG GTPase family. Monomer. The cofactor is Mg(2+).

Its subcellular location is the cytoplasm. Functionally, an essential GTPase which binds GTP, GDP and possibly (p)ppGpp with moderate affinity, with high nucleotide exchange rates and a fairly low GTP hydrolysis rate. Plays a role in control of the cell cycle, stress response, ribosome biogenesis and in those bacteria that undergo differentiation, in morphogenesis control. This is GTPase Obg from Bartonella quintana (strain Toulouse) (Rochalimaea quintana).